The sequence spans 442 residues: Syndecan-3 (442 aa).

2 disordered regions span residues methionine 1–alanine 25 and arginine 55–phenylalanine 85. The signal sequence occupies residues methionine 1 to glycine 44. The Extracellular portion of the chain corresponds to alanine 45–valine 387. The span at glycine 61 to aspartate 75 shows a compositional bias: acidic residues. O-linked (Xyl...) (glycosaminoglycan) serine glycosylation is found at serine 78, serine 80, serine 82, and serine 89. Threonine 107 carries an O-linked (GalNAc) threonine; by GALNT13 glycan. Disordered stretches follow at residues glutamate 151–proline 175, alanine 180–alanine 199, alanine 225–alanine 244, threonine 252–proline 327, and alanine 339–alanine 372. Low complexity predominate over residues alanine 157–proline 175. Serine 161 is a glycosylation site (O-linked (GalNAc) serine; by GALNT13). O-linked (GalNAc) threonine; by GALNT13 glycosylation is found at threonine 162, threonine 163, threonine 170, and threonine 172. Residues threonine 276–threonine 287 are compositionally biased toward low complexity. Polar residues predominate over residues valine 289–glutamine 303. O-linked (Xyl...) (glycosaminoglycan) serine glycans are attached at residues serine 315 and serine 367. The chain crosses the membrane as a helical span at residues alanine 388–isoleucine 408. A phosphotyrosine mark is found at tyrosine 409, tyrosine 419, tyrosine 431, and tyrosine 441. Over tyrosine 409–alanine 442 the chain is Cytoplasmic. The tract at residues tyrosine 419–alanine 442 is disordered. Positions lysine 433 to alanine 442 are enriched in basic and acidic residues.

It belongs to the syndecan proteoglycan family. As to quaternary structure, interacts with TIAM1. Interacts (via heparan sulfate chains) with PTN; this interaction mediates the neurite outgrowth-promoting signal from PTN to the cytoskeleton of growing neurites; this interaction mediates osteoblast recruitment. Interacts with MDK; this interaction induces SDC3 clustering; this interaction induces neuronal cell adhesion and neurite outgrowth. O-glycosylated within the Thr/Ser-rich region which could interact with lectin domains on other molecules. High levels in neonatal brain, heart, and Schwann cells, barely detectable in neonatal or adult liver, or adult brain.

Its subcellular location is the cell membrane. Functionally, cell surface proteoglycan that may bear heparan sulfate. May have a role in the organization of cell shape by affecting the actin cytoskeleton, possibly by transferring signals from the cell surface in a sugar-dependent mechanism. The polypeptide is Syndecan-3 (Sdc3) (Rattus norvegicus (Rat)).